The following is a 720-amino-acid chain: Glutaryl-7-aminocephalosporanic-acid acylase (720 aa).

An N-terminal signal peptide occupies residues 1–29; it reads MLRVLHRAASALVMATVIGLAPGVAFALA. Positions 188-198 are cleaved as a propeptide — spacer peptide; sequence EGDPPDLADQG. Ser-199 serves as the catalytic Nucleophile. Active-site residues include His-221 and Glu-653.

This sequence belongs to the peptidase S45 family. In terms of assembly, heterodimer of a small subunit and a large subunit processed from the same precursor.

The protein resides in the periplasm. The enzyme catalyses (7R)-7-(4-carboxybutanamido)cephalosporanate + H2O = (7R)-7-aminocephalosporanate + glutarate. Functionally, catalyzes the deacylation of 7 beta-(4-carboxybutanamido)cephalosporanic acid (glutaryl-7-aminocephalosporanic acid or GL-7-ACA) to 7-aminocephalosporanic acid (7-ACA). Cannot efficiently use cephalosporin C (CPC), penicillin G, or ampicillin as substrates. The chain is Glutaryl-7-aminocephalosporanic-acid acylase from Brevundimonas diminuta (Pseudomonas diminuta).